The following is a 37-amino-acid chain: Photosystem II reaction center protein M (37 aa).

A helical transmembrane segment spans residues 5–25 (ILAFIATALFILVPTAFLLII).

The protein belongs to the PsbM family. PSII is composed of 1 copy each of membrane proteins PsbA, PsbB, PsbC, PsbD, PsbE, PsbF, PsbH, PsbI, PsbJ, PsbK, PsbL, PsbM, PsbT, PsbX, PsbY, PsbZ, Psb30/Ycf12, at least 3 peripheral proteins of the oxygen-evolving complex and a large number of cofactors. It forms dimeric complexes.

The protein localises to the plastid. The protein resides in the chloroplast thylakoid membrane. Its function is as follows. One of the components of the core complex of photosystem II (PSII). PSII is a light-driven water:plastoquinone oxidoreductase that uses light energy to abstract electrons from H(2)O, generating O(2) and a proton gradient subsequently used for ATP formation. It consists of a core antenna complex that captures photons, and an electron transfer chain that converts photonic excitation into a charge separation. This subunit is found at the monomer-monomer interface. The polypeptide is Photosystem II reaction center protein M (Pelargonium hortorum (Common geranium)).